The chain runs to 308 residues: Probable manganese-dependent inorganic pyrophosphatase (308 aa).

Histidine 9, aspartate 13, aspartate 15, aspartate 75, histidine 97, and aspartate 149 together coordinate Mn(2+).

It belongs to the PPase class C family. Requires Mn(2+) as cofactor.

The protein resides in the cytoplasm. It catalyses the reaction diphosphate + H2O = 2 phosphate + H(+). This chain is Probable manganese-dependent inorganic pyrophosphatase, found in Bacillus pumilus (strain SAFR-032).